A 222-amino-acid polypeptide reads, in one-letter code: Cytidylate kinase (222 aa).

11 to 19 (GPTASGKGT) provides a ligand contact to ATP.

This sequence belongs to the cytidylate kinase family. Type 1 subfamily.

The protein localises to the cytoplasm. It catalyses the reaction CMP + ATP = CDP + ADP. The enzyme catalyses dCMP + ATP = dCDP + ADP. This chain is Cytidylate kinase, found in Cupriavidus necator (strain ATCC 17699 / DSM 428 / KCTC 22496 / NCIMB 10442 / H16 / Stanier 337) (Ralstonia eutropha).